Here is an 88-residue protein sequence, read N- to C-terminus: Small ribosomal subunit protein uS17 (88 aa).

The protein belongs to the universal ribosomal protein uS17 family. In terms of assembly, part of the 30S ribosomal subunit.

In terms of biological role, one of the primary rRNA binding proteins, it binds specifically to the 5'-end of 16S ribosomal RNA. This chain is Small ribosomal subunit protein uS17, found in Prochlorococcus marinus (strain SARG / CCMP1375 / SS120).